Reading from the N-terminus, the 44-residue chain is Somatoliberin (44 aa).

The residue at position 44 (Leu-44) is a Leucine amide.

The protein belongs to the glucagon family.

Its subcellular location is the secreted. GRF is released by the hypothalamus and acts on the adenohypophyse to stimulate the secretion of growth hormone. This Capra hircus (Goat) protein is Somatoliberin (GHRH).